Consider the following 1233-residue polypeptide: Insulin receptor substrate 1 (1233 aa).

At Ser3 the chain carries Phosphoserine. The mediates interaction with PHIP stretch occupies residues Ser3–Ser133. Residues Asp12–Asn115 enclose the PH domain. A Phosphoserine; by CK2 modification is found at Ser99. The 105-residue stretch at Phe155–Phe259 folds into the IRS-type PTB domain. The tract at residues Asp257–Glu425 is disordered. Low complexity predominate over residues Lys264–Ser276. Ser265 and Ser302 each carry phosphoserine; by RPS6KB1. Ser307 bears the Phosphoserine; by IKKB, MAPK8 and RPS6KB1 mark. Phosphoserine occurs at positions 318, 325, 340, and 343. Basic residues predominate over residues Thr349–Ser358. Composition is skewed to low complexity over residues Ser378–Ser399 and Ser407–Gly419. Position 414 is a phosphoserine (Ser414). Phosphothreonine is present on residues Thr441 and Thr448. The residue at position 460 (Tyr460) is a Phosphotyrosine; by INSR. The YXXM motif 1 motif lies at Tyr460–Met463. The residue at position 522 (Ser522) is a Phosphoserine; by RPS6KB1. 2 short sequence motifs (YXXM motif) span residues Tyr546–Met549 and Tyr608–Met611. Residue Tyr608 is modified to Phosphotyrosine; by INSR. Ser612 carries the phosphoserine modification. Residue Tyr628 is modified to Phosphotyrosine; by INSR. Positions Tyr628 to Met631 match the YXXM motif 4 motif. Phosphoserine; by RPS6KB1 and ROCK2 is present on Ser632. Residues Gln651 to Leu720 are disordered. A Phosphotyrosine modification is found at Tyr658. The YXXM motif 5 motif lies at Tyr658–Met661. The segment covering Ser662 to Ser689 has biased composition (low complexity). The short motif at Tyr727–Met730 is the YXXM motif 6 element. Residues Phe766 to Thr985 are disordered. Basic and acidic residues predominate over residues Arg771–Arg780. Low complexity-rich tracts occupy residues Arg785–Arg794 and Asp801–Ser810. Ser789 carries the post-translational modification Phosphoserine; by AMPK and SIK2. Position 887 is a phosphoserine (Ser887). Phosphotyrosine; by INSR occurs at positions 891, 935, and 983. The tract at residues Tyr891–Asn893 is GRB2-binding. 3 short sequence motifs (YXXM motif) span residues Tyr935–Met938, Tyr983–Met986, and Tyr1006–Met1009. The disordered stretch occupies residues Ala1015–Ser1137. Residues Ser1032–Pro1042 show a composition bias toward low complexity. Composition is skewed to polar residues over residues Gln1043–His1052 and Thr1069–Ala1081. 2 positions are modified to phosphoserine: Ser1096 and Ser1097. Residues Ala1116 to Ser1129 show a composition bias toward gly residues. The residue at position 1173 (Tyr1173) is a Phosphotyrosine; by INSR. The tract at residues Leu1178–Gln1233 is disordered. Lys1180 participates in a covalent cross-link: Glycyl lysine isopeptide (Lys-Gly) (interchain with G-Cter in ubiquitin). Over residues Gly1203–Lys1227 the composition is skewed to polar residues. At Tyr1220 the chain carries Phosphotyrosine; by INSR.

Interacts (via phosphorylated YXXM motifs) with PIK3R1. Interacts with ROCK1. Interacts with GRB2. Interacts with SOCS7. Interacts (via IRS-type PTB domain) with IGF1R and INSR (via the tyrosine-phosphorylated NPXY motif). Interacts with UBTF and PIK3CA. Interacts (via PH domain) with PHIP. Interacts with FER. Interacts with ALK. Interacts with EIF2AK2/PKR. Interacts with GKAP1. Interacts with DGKZ in the absence of insulin; insulin stimulation decreases this interaction. Found in a ternary complex with DGKZ and PIP5K1A in the absence of insulin stimulation. Interacts with SQSTM1; the interaction is disrupted by the presence of tensin TNS2. Interacts with NCK1 (via SH2 domain). Interacts with NCK2 (via SH3 domain). Interacts with SH2B1; this interaction enhances leptin-induced activation of the PI3-kinase pathway. Interacts with DVL2; this interaction promotes the Wnt/beta-catenin signaling pathway. Serine phosphorylation of IRS1 is a mechanism for insulin resistance. Ser-307 phosphorylation inhibits insulin action through disruption of IRS1 interaction with the insulin receptor. Phosphorylation of Tyr-891 is required for GRB2-binding. Phosphorylated by ALK. Phosphorylated at Ser-265, Ser-302, Ser-632 and Ser-1097 by RPS6KB1; phosphorylation induces accelerated degradation of IRS1. Phosphorylated on tyrosine residues in response to insulin. In skeletal muscles, dephosphorylated on Tyr-608 by TNS2 under anabolic conditions; dephosphorylation results in the proteasomal degradation of IRS1. In terms of processing, ubiquitinated by the Cul7-RING(FBXW8) complex in a mTOR-dependent manner, leading to its degradation: the Cul7-RING(FBXW8) complex recognizes and binds IRS1 previously phosphorylated by S6 kinase (RPS6KB1 or RPS6KB2). Ubiquitinated by TRAF4 through 'Lys-29' linkage; this ubiquitination regulates the interaction of IRS1 with IGFR and IRS1 tyrosine phosphorylation upon IGF1 stimulation. Post-translationally, S-nitrosylation at by BLVRB inhibits its activity. As to expression, expressed in osteoblasts, but not in osteoclasts.

The protein localises to the cytoplasm. It is found in the nucleus. Functionally, signaling adapter protein that participates in the signal transduction from two prominent receptor tyrosine kinases, insulin receptor/INSR and insulin-like growth factor I receptor/IGF1R. Plays therefore an important role in development, growth, glucose homeostasis as well as lipid metabolism. Upon phosphorylation by the insulin receptor, functions as a signaling scaffold that propagates insulin action through binding to SH2 domain-containing proteins including the p85 regulatory subunit of PI3K, NCK1, NCK2, GRB2 or SHP2. Recruitment of GRB2 leads to the activation of the guanine nucleotide exchange factor SOS1 which in turn triggers the Ras/Raf/MEK/MAPK signaling cascade. Activation of the PI3K/AKT pathway is responsible for most of insulin metabolic effects in the cell, and the Ras/Raf/MEK/MAPK is involved in the regulation of gene expression and in cooperation with the PI3K pathway regulates cell growth and differentiation. Acts a positive regulator of the Wnt/beta-catenin signaling pathway through suppression of DVL2 autophagy-mediated degradation leading to cell proliferation. The polypeptide is Insulin receptor substrate 1 (Irs1) (Mus musculus (Mouse)).